Here is a 444-residue protein sequence, read N- to C-terminus: tRNA-2-methylthio-N(6)-dimethylallyladenosine synthase (444 aa).

The region spanning 10–126 is the MTTase N-terminal domain; that stretch reads SSFYIHTFGC…LAGLVAGLRE (117 aa). [4Fe-4S] cluster is bound by residues C19, C55, C89, C163, C167, and C170. The Radical SAM core domain maps to 149-379; the sequence is RAGSISAFLP…IELQNAISRE (231 aa). The region spanning 382–444 is the TRAM domain; it reads QREIGKTVEV…TSATLSGEAV (63 aa).

Belongs to the methylthiotransferase family. MiaB subfamily. In terms of assembly, monomer. The cofactor is [4Fe-4S] cluster.

The protein localises to the cytoplasm. The catalysed reaction is N(6)-dimethylallyladenosine(37) in tRNA + (sulfur carrier)-SH + AH2 + 2 S-adenosyl-L-methionine = 2-methylsulfanyl-N(6)-dimethylallyladenosine(37) in tRNA + (sulfur carrier)-H + 5'-deoxyadenosine + L-methionine + A + S-adenosyl-L-homocysteine + 2 H(+). In terms of biological role, catalyzes the methylthiolation of N6-(dimethylallyl)adenosine (i(6)A), leading to the formation of 2-methylthio-N6-(dimethylallyl)adenosine (ms(2)i(6)A) at position 37 in tRNAs that read codons beginning with uridine. The chain is tRNA-2-methylthio-N(6)-dimethylallyladenosine synthase from Chlorobaculum tepidum (strain ATCC 49652 / DSM 12025 / NBRC 103806 / TLS) (Chlorobium tepidum).